A 37-amino-acid polypeptide reads, in one-letter code: Trypsin inhibitor 3 (37 aa).

3 disulfide bridges follow: cysteine 4–cysteine 21, cysteine 11–cysteine 25, and cysteine 20–cysteine 36.

Functionally, trypsin inhibitor. The protein is Trypsin inhibitor 3 of Spinacia oleracea (Spinach).